A 1070-amino-acid polypeptide reads, in one-letter code: Probable arabinosyltransferase C (1070 aa).

A run of 12 helical transmembrane segments spans residues 10–32 (IARL…TPFL), 210–232 (LLKT…ALHL), 247–269 (SRWW…WHFV), 399–421 (VATS…LFSG), 425–442 (IASI…LTIL), 449–471 (FGAV…LIFR), 512–534 (SVAR…AMSL), 547–564 (SRRI…MMFT), 574–596 (VFAG…AALR), 603–625 (VFAA…WWYV), 645–664 (TALL…FHFV), and 685–707 (SPIA…MAMI).

This sequence belongs to the emb family.

Its subcellular location is the cell membrane. Functionally, arabinosyl transferase responsible for the polymerization of arabinose into the arabinan of arabinogalactan. The polypeptide is Probable arabinosyltransferase C (embC) (Mycobacterium leprae (strain TN)).